A 240-amino-acid polypeptide reads, in one-letter code: Bidirectional sugar transporter SWEET5 (240 aa).

The Extracellular portion of the chain corresponds to 1–9 (MTDPHTART). The chain crosses the membrane as a helical span at residues 10–30 (IVGIVGNVISFGLFCAPIPTM). Residues 10–95 (IVGIVGNVIS…YVTIFFVFAT (86 aa)) enclose the MtN3/slv 1 domain. The Cytoplasmic portion of the chain corresponds to 31–45 (VKIWKMKSVSEFKPD). A helical transmembrane segment spans residues 46–66 (PYVATVLNCMMWTFYGLPFVQ). Topologically, residues 67 to 72 (PDSLLV) are extracellular. A helical transmembrane segment spans residues 73-93 (ITINGTGLFMELVYVTIFFVF). Over 94–103 (ATSPVRRKIT) the chain is Cytoplasmic. The helical transmembrane segment at 104–124 (IAMVIEVIFMAVVIFCTMYFL) threads the bilayer. Topologically, residues 125–131 (HTTKQRS) are extracellular. Residues 132 to 152 (MLIGILCIVFNVIMYAAPLTV) form a helical membrane-spanning segment. Residues 133-217 (LIGILCIVFN…IIYITYYKTT (85 aa)) enclose the MtN3/slv 2 domain. Over 153-165 (MKLVIKTKSVKYM) the chain is Cytoplasmic. A helical transmembrane segment spans residues 166 to 186 (PFFLSLANFMNGVVWVIYACL). Residues 187–190 (KFDP) are Extracellular-facing. The helical transmembrane segment at 191 to 211 (YILIPNGLGSLSGIIQLIIYI) threads the bilayer. Residues 212-240 (TYYKTTNWNDDDEDKEKRYSNAGIELGQA) are Cytoplasmic-facing.

It belongs to the SWEET sugar transporter family. Forms homooligomers and heterooligomers with SWEET6, SWEET8, SWEET9, SWEET11 and SWEET12.

Its subcellular location is the cell membrane. In terms of biological role, mediates both low-affinity uptake and efflux of sugar across the plasma membrane. May play roles in nurturing the male gametophyte. This is Bidirectional sugar transporter SWEET5 from Arabidopsis thaliana (Mouse-ear cress).